Consider the following 240-residue polypeptide: UDP-2,3-diacylglucosamine hydrolase (240 aa).

Residues D8, H10, D41, N79, and H114 each contribute to the Mn(2+) site. 79–80 (NR) provides a ligand contact to substrate. Substrate contacts are provided by D122, S160, T164, K167, and H195. Mn(2+) contacts are provided by H195 and H197.

This sequence belongs to the LpxH family. Mn(2+) serves as cofactor.

It localises to the cell inner membrane. It carries out the reaction UDP-2-N,3-O-bis[(3R)-3-hydroxytetradecanoyl]-alpha-D-glucosamine + H2O = 2-N,3-O-bis[(3R)-3-hydroxytetradecanoyl]-alpha-D-glucosaminyl 1-phosphate + UMP + 2 H(+). Its pathway is glycolipid biosynthesis; lipid IV(A) biosynthesis; lipid IV(A) from (3R)-3-hydroxytetradecanoyl-[acyl-carrier-protein] and UDP-N-acetyl-alpha-D-glucosamine: step 4/6. In terms of biological role, hydrolyzes the pyrophosphate bond of UDP-2,3-diacylglucosamine to yield 2,3-diacylglucosamine 1-phosphate (lipid X) and UMP by catalyzing the attack of water at the alpha-P atom. Involved in the biosynthesis of lipid A, a phosphorylated glycolipid that anchors the lipopolysaccharide to the outer membrane of the cell. The polypeptide is UDP-2,3-diacylglucosamine hydrolase (Pseudomonas paraeruginosa (strain DSM 24068 / PA7) (Pseudomonas aeruginosa (strain PA7))).